The chain runs to 150 residues: uncharacterized protein (150 aa).

It belongs to the OsmC/Ohr family.

This is an uncharacterized protein from Bacillus subtilis (strain 168).